Consider the following 262-residue polypeptide: Acyl-[acyl-carrier-protein]--UDP-N-acetylglucosamine O-acyltransferase (262 aa).

It belongs to the transferase hexapeptide repeat family. LpxA subfamily. Homotrimer.

It localises to the cytoplasm. It carries out the reaction a (3R)-hydroxyacyl-[ACP] + UDP-N-acetyl-alpha-D-glucosamine = a UDP-3-O-[(3R)-3-hydroxyacyl]-N-acetyl-alpha-D-glucosamine + holo-[ACP]. The protein operates within glycolipid biosynthesis; lipid IV(A) biosynthesis; lipid IV(A) from (3R)-3-hydroxytetradecanoyl-[acyl-carrier-protein] and UDP-N-acetyl-alpha-D-glucosamine: step 1/6. Functionally, involved in the biosynthesis of lipid A, a phosphorylated glycolipid that anchors the lipopolysaccharide to the outer membrane of the cell. The polypeptide is Acyl-[acyl-carrier-protein]--UDP-N-acetylglucosamine O-acyltransferase (Campylobacter concisus (strain 13826)).